The following is a 441-amino-acid chain: Trigger factor (441 aa).

Residues 161–246 (GDQVTIDFVG…VSEVAEQILP (86 aa)) enclose the PPIase FKBP-type domain.

It belongs to the FKBP-type PPIase family. Tig subfamily.

Its subcellular location is the cytoplasm. The catalysed reaction is [protein]-peptidylproline (omega=180) = [protein]-peptidylproline (omega=0). In terms of biological role, involved in protein export. Acts as a chaperone by maintaining the newly synthesized protein in an open conformation. Functions as a peptidyl-prolyl cis-trans isomerase. This is Trigger factor from Marinomonas sp. (strain MWYL1).